A 332-amino-acid chain; its full sequence is uncharacterized protein (332 aa).

This sequence belongs to the peptidase U32 family.

This is an uncharacterized protein from Methanocaldococcus jannaschii (strain ATCC 43067 / DSM 2661 / JAL-1 / JCM 10045 / NBRC 100440) (Methanococcus jannaschii).